We begin with the raw amino-acid sequence, 195 residues long: Thymidine kinase (195 aa).

Residues 9-16 and 87-90 contribute to the ATP site; these read STMNAGKS and DEAQ. The active-site Proton acceptor is E88. Residues C145, C147, C182, and H185 each contribute to the Zn(2+) site.

It belongs to the thymidine kinase family. Homotetramer.

It is found in the cytoplasm. It carries out the reaction thymidine + ATP = dTMP + ADP + H(+). In Jannaschia sp. (strain CCS1), this protein is Thymidine kinase.